We begin with the raw amino-acid sequence, 462 residues long: Ubiquitin carboxyl-terminal hydrolase calypso (462 aa).

A UCH catalytic domain is found at Gly-29–Pro-260. Cys-115 (nucleophile) is an active-site residue. The Proton donor role is filled by His-197. One can recognise a ULD domain in the interval Asn-357 to Pro-385. The segment at Lys-387–Lys-462 is positively charged C-terminal tail required for binding nucleosomes. Positions Gly-413–Thr-447 are enriched in low complexity. Residues Gly-413–Lys-462 form a disordered region. Over residues Pro-448–Lys-462 the composition is skewed to basic residues.

This sequence belongs to the peptidase C12 family. BAP1 subfamily. In terms of assembly, catalytic component of the polycomb repressive deubiquitinase (PR-DUB) complex, at least composed of caly/calypso, Asx and sba (MBD5/6 homolog). The PR-DUB complex associates with nucleosomes to mediate deubiquitination of histone H2AK118ub1 substrates; the association requires the positively charged C-terminal tail of caly, probably due to direct binding of DNA. Interacts (via ULD domain) with Asx (via DEUBAD domain); the interaction produces a stable heterodimer with a composite binding site for ubiquitin. Homodimerizes (via coiled-coil hinge-region between the UCH and ULD domains) to mediate assembly of 2 copies of the caly-Asx heterodimer into a bisymmetric tetramer; dimerization enhances PR-DUB association with nucleosomes.

It is found in the nucleus. The enzyme catalyses Thiol-dependent hydrolysis of ester, thioester, amide, peptide and isopeptide bonds formed by the C-terminal Gly of ubiquitin (a 76-residue protein attached to proteins as an intracellular targeting signal).. Functionally, catalytic component of the polycomb repressive deubiquitinase (PR-DUB) complex, a complex that specifically mediates deubiquitination of histone H2A monoubiquitinated at 'Lys-119' (H2AK118ub1). Mediates bisymmetric organization of the PR-DUB complex and is involved in association with nucleosomes to mediate deubiquitination. Does not deubiquitinate monoubiquitinated histone H2B. Required to maintain the transcriptionally repressive state of homeotic genes throughout development. The PR-DUB complex has weak or no activity toward 'Lys-48'- and 'Lys-63'-linked polyubiquitin chains. Polycomb group (PcG) protein. The sequence is that of Ubiquitin carboxyl-terminal hydrolase calypso from Drosophila grimshawi (Hawaiian fruit fly).